A 144-amino-acid polypeptide reads, in one-letter code: L-fucose mutarotase (144 aa).

H22 functions as the Proton donor in the catalytic mechanism. Residues D30, R109, and 131–133 (YGN) contribute to the substrate site.

Belongs to the RbsD / FucU family. FucU mutarotase subfamily. In terms of assembly, homodecamer.

The protein resides in the cytoplasm. The catalysed reaction is alpha-L-fucose = beta-L-fucose. It functions in the pathway carbohydrate metabolism; L-fucose metabolism. In terms of biological role, involved in the anomeric conversion of L-fucose. In Haemophilus influenzae (strain PittEE), this protein is L-fucose mutarotase.